A 290-amino-acid chain; its full sequence is Lipoyl synthase (290 aa).

Residues Cys44, Cys49, Cys55, Cys70, Cys74, Cys77, and Ser281 each coordinate [4Fe-4S] cluster. The 215-residue stretch at 56 to 270 (WRCGTATFMI…KQIGLEKGFS (215 aa)) folds into the Radical SAM core domain.

It belongs to the radical SAM superfamily. Lipoyl synthase family. [4Fe-4S] cluster serves as cofactor.

The protein localises to the cytoplasm. The enzyme catalyses [[Fe-S] cluster scaffold protein carrying a second [4Fe-4S](2+) cluster] + N(6)-octanoyl-L-lysyl-[protein] + 2 oxidized [2Fe-2S]-[ferredoxin] + 2 S-adenosyl-L-methionine + 4 H(+) = [[Fe-S] cluster scaffold protein] + N(6)-[(R)-dihydrolipoyl]-L-lysyl-[protein] + 4 Fe(3+) + 2 hydrogen sulfide + 2 5'-deoxyadenosine + 2 L-methionine + 2 reduced [2Fe-2S]-[ferredoxin]. It functions in the pathway protein modification; protein lipoylation via endogenous pathway; protein N(6)-(lipoyl)lysine from octanoyl-[acyl-carrier-protein]: step 2/2. Catalyzes the radical-mediated insertion of two sulfur atoms into the C-6 and C-8 positions of the octanoyl moiety bound to the lipoyl domains of lipoate-dependent enzymes, thereby converting the octanoylated domains into lipoylated derivatives. This chain is Lipoyl synthase, found in Treponema denticola (strain ATCC 35405 / DSM 14222 / CIP 103919 / JCM 8153 / KCTC 15104).